A 120-amino-acid polypeptide reads, in one-letter code: Chaperonin GroEL (120 aa).

Position 23-27 (23-27 (DGTTT)) interacts with ATP.

It belongs to the chaperonin (HSP60) family. As to quaternary structure, forms a cylinder of 14 subunits composed of two heptameric rings stacked back-to-back. Interacts with the co-chaperonin GroES.

Its subcellular location is the cytoplasm. It catalyses the reaction ATP + H2O + a folded polypeptide = ADP + phosphate + an unfolded polypeptide.. In terms of biological role, together with its co-chaperonin GroES, plays an essential role in assisting protein folding. The GroEL-GroES system forms a nano-cage that allows encapsulation of the non-native substrate proteins and provides a physical environment optimized to promote and accelerate protein folding. The polypeptide is Chaperonin GroEL (Mycolicibacterium fallax (Mycobacterium fallax)).